The chain runs to 1043 residues: Calcium-transporting ATPase 1, plasma membrane-type (1043 aa).

Over 1–178 the chain is Cytoplasmic; sequence MSFIRKKSME…FLWDASQDMT (178 aa). Transmembrane regions (helical) follow at residues 179 to 199 and 202 to 222; these read LLLL…TEGW and GMYD…ITAA. The Cytoplasmic segment spans residues 223–258; that stretch reads SDYKQSLQFRDLDKEKKKIDVQVTRDGYRQKVSIYD. 2 helical membrane passes run 259 to 279 and 356 to 376; these read IVVG…DGLF and VATI…TVLM. The Cytoplasmic portion of the chain corresponds to 377–395; that stretch reads ARFLLGKAGAPGGLLRWRM. The helical transmembrane segment at 396 to 416 threads the bilayer; the sequence is VDALAVLNFFAVAVTIIVVAV. Residue Asp460 is the 4-aspartylphosphate intermediate of the active site. Asp761 and Asp765 together coordinate Mg(2+). A helical membrane pass occupies residues 824 to 844; the sequence is LTVNVVALMVNFISASFTGSA. A topological domain (cytoplasmic) is located at residue Pro845. 2 consecutive transmembrane segments (helical) span residues 846 to 866 and 891 to 911; these read LTIV…ALAL and VMWR…GVLL. Topologically, residues 912-955 are cytoplasmic; it reads LRGKSLLQINGPQADSLLNTFVFNTFVFCQVFNEVNSREMEKIN. 2 helical membrane-spanning segments follow: residues 956 to 976 and 998 to 1018; these read VFSG…TAGF and WLTS…LKCI. The Cytoplasmic portion of the chain corresponds to 1019–1043; that stretch reads PVESGSDASDRHDGYRPIPTGPSAV. The segment at 1023 to 1043 is disordered; that stretch reads GSDASDRHDGYRPIPTGPSAV.

It belongs to the cation transport ATPase (P-type) (TC 3.A.3) family. Type IIB subfamily.

The protein resides in the membrane. It carries out the reaction Ca(2+)(in) + ATP + H2O = Ca(2+)(out) + ADP + phosphate + H(+). With respect to regulation, activated by calmodulin. This magnesium-dependent enzyme catalyzes the hydrolysis of ATP coupled with the translocation of calcium from the cytosol out of the cell, into the endoplasmic reticulum, or into organelles. This is Calcium-transporting ATPase 1, plasma membrane-type from Oryza sativa subsp. japonica (Rice).